Reading from the N-terminus, the 187-residue chain is Elongation factor P (187 aa).

It belongs to the elongation factor P family.

The protein localises to the cytoplasm. It functions in the pathway protein biosynthesis; polypeptide chain elongation. In terms of biological role, involved in peptide bond synthesis. Stimulates efficient translation and peptide-bond synthesis on native or reconstituted 70S ribosomes in vitro. Probably functions indirectly by altering the affinity of the ribosome for aminoacyl-tRNA, thus increasing their reactivity as acceptors for peptidyl transferase. The chain is Elongation factor P from Desulfatibacillum aliphaticivorans.